We begin with the raw amino-acid sequence, 213 residues long: Thiamine-phosphate synthase (213 aa).

Residues 39-43 and aspartate 71 each bind 4-amino-2-methyl-5-(diphosphooxymethyl)pyrimidine; that span reads QYRDK. 2 residues coordinate Mg(2+): aspartate 72 and aspartate 91. Serine 108 contributes to the 4-amino-2-methyl-5-(diphosphooxymethyl)pyrimidine binding site. 135 to 137 is a 2-[(2R,5Z)-2-carboxy-4-methylthiazol-5(2H)-ylidene]ethyl phosphate binding site; sequence TDT. Lysine 138 serves as a coordination point for 4-amino-2-methyl-5-(diphosphooxymethyl)pyrimidine. 2-[(2R,5Z)-2-carboxy-4-methylthiazol-5(2H)-ylidene]ethyl phosphate is bound by residues glycine 165 and 185–186; that span reads VS.

It belongs to the thiamine-phosphate synthase family. It depends on Mg(2+) as a cofactor.

The catalysed reaction is 2-[(2R,5Z)-2-carboxy-4-methylthiazol-5(2H)-ylidene]ethyl phosphate + 4-amino-2-methyl-5-(diphosphooxymethyl)pyrimidine + 2 H(+) = thiamine phosphate + CO2 + diphosphate. It carries out the reaction 2-(2-carboxy-4-methylthiazol-5-yl)ethyl phosphate + 4-amino-2-methyl-5-(diphosphooxymethyl)pyrimidine + 2 H(+) = thiamine phosphate + CO2 + diphosphate. It catalyses the reaction 4-methyl-5-(2-phosphooxyethyl)-thiazole + 4-amino-2-methyl-5-(diphosphooxymethyl)pyrimidine + H(+) = thiamine phosphate + diphosphate. It functions in the pathway cofactor biosynthesis; thiamine diphosphate biosynthesis; thiamine phosphate from 4-amino-2-methyl-5-diphosphomethylpyrimidine and 4-methyl-5-(2-phosphoethyl)-thiazole: step 1/1. Its function is as follows. Condenses 4-methyl-5-(beta-hydroxyethyl)thiazole monophosphate (THZ-P) and 2-methyl-4-amino-5-hydroxymethyl pyrimidine pyrophosphate (HMP-PP) to form thiamine monophosphate (TMP). The protein is Thiamine-phosphate synthase of Thermoplasma acidophilum (strain ATCC 25905 / DSM 1728 / JCM 9062 / NBRC 15155 / AMRC-C165).